Reading from the N-terminus, the 198-residue chain is Zinc finger protein 41 (198 aa).

Basic residues predominate over residues 1–12; that stretch reads MEKPATRKKKSQ. A disordered region spans residues 1–56; it reads MEKPATRKKKSQAPKEEAGAQKATVKGEKTSKGKKATKKPRKPRRPRKEPVLSPED. Over residues 13 to 31 the composition is skewed to basic and acidic residues; sequence APKEEAGAQKATVKGEKTS. Over residues 32 to 47 the composition is skewed to basic residues; sequence KGKKATKKPRKPRRPR. 4 consecutive C2H2-type zinc fingers follow at residues 87–109, 115–137, 143–165, and 171–193; these read YECGECGRIFKHKTDHIRHQRVH, FKCDQCGKTFRHSSDVTKHQRIH, FKCGECGKAFNCGSNLLKHQKTH, and YGCEECGKSFAYSSCLIRHRKRH.

Belongs to the krueppel C2H2-type zinc-finger protein family. In terms of tissue distribution, predominantly in the spermatocytes and spermatids of testes. It is also expressed in the fetus and embryonic stem cells at lower levels.

It is found in the nucleus. Functionally, a putative DNA-binding regulatory protein associated with meiosis in spermatogenesis. The polypeptide is Zinc finger protein 41 (Zfp41) (Mus musculus (Mouse)).